We begin with the raw amino-acid sequence, 695 residues long: MAPWPELENAHPNPNKFIEGASGPQSSIPDKDKGTSKTNDSGTPVAKIELLPSYSALVLIEEPPEGNDPWDLPELQDNGIKWSERDSKGKILCIFQGIGKFILLLGFLYLFVCSLDVLSSAFQLVGGKMAGQFFSNNSIMSNPVAGLVIGVLVTVMVQSSSTSSSIIVSMVASSLLSVRAAIPIIMGANIGTSITNTIVALMQAGDRNEFRRAFAGATVHDFFNWLSVLVLLPLEAATHYLEKLTNLVLETFSFQNGEDAPDILKVITDPFTKLIIQLDKKVIQQIAMGDSEAQNKSLIKIWCKTISNVIEENVTVPSPDNCTSPSYCWTDGIQTWTIQNVTEKENIAKCQHIFVNFSLPDLAVGIILLTVSLLILCGCLIMIVKLLGSVLRGQVATVIKKTLNTDFPFPFAWLTGYLAILVGAGMTFIVQSSSVFTSAMTPLIGIGVISIERAYPLTLGSNIGTTTTAILAALASPGNTLRSSLQIALCHFFFNISGILLWYPIPFTRLPIRLAKGLGNISAKYRWFAVFYLIFFFLLTPLTVFGLSLAGWPVLVGVGVPIILLILLVLCLRMLQARCPRILPLKLRDWNFLPLWMHSLKPWDNIISLATSCFQRRCCCCCRVCCRVCCMVCGCKCCRCSKCCKNLEEEEKEQDVPVKASGGFDNTAMSKECQDEGKGQVEVLGMKALSNTTVF.

The tract at residues M1–P44 is disordered. Residues M1–K90 lie on the Cytoplasmic side of the membrane. A helical transmembrane segment spans residues I91–F111. Residues V112–N136 lie on the Extracellular side of the membrane. Residues N137–V157 form a helical membrane-spanning segment. The Cytoplasmic portion of the chain corresponds to Q158–A213. The helical transmembrane segment at F214 to L234 threads the bilayer. Residues E235–A363 are Extracellular-facing. N-linked (GlcNAc...) asparagine glycosylation is found at N295, N313, N321, N340, and N356. A disulfide bond links C303 and C350. A helical transmembrane segment spans residues V364 to V384. Residues K385 to P408 lie on the Cytoplasmic side of the membrane. A helical transmembrane segment spans residues F409–I429. Residues V430–Q486 are Extracellular-facing. A helical transmembrane segment spans residues I487–F507. Residues T508 to R526 lie on the Cytoplasmic side of the membrane. The helical transmembrane segment at W527–L547 threads the bilayer. Over S548 to G551 the chain is Extracellular. Residues W552–L572 traverse the membrane as a helical segment. The Cytoplasmic segment spans residues R573–F695.

The protein belongs to the SLC34A transporter family. As to expression, highly expressed in the lung, in type II alveolar cells. Moderately expressed in kidney followed by small intestine.

Its subcellular location is the apical cell membrane. The enzyme catalyses 3 Na(+)(out) + phosphate(out) = 3 Na(+)(in) + phosphate(in). Involved in actively transporting phosphate into cells via Na(+) cotransport. The chain is Sodium-dependent phosphate transport protein 2B (Slc34a2) from Rattus norvegicus (Rat).